A 208-amino-acid polypeptide reads, in one-letter code: Large ribosomal subunit protein uL4 (208 aa).

A disordered region spans residues R54–S78.

This sequence belongs to the universal ribosomal protein uL4 family. In terms of assembly, part of the 50S ribosomal subunit.

One of the primary rRNA binding proteins, this protein initially binds near the 5'-end of the 23S rRNA. It is important during the early stages of 50S assembly. It makes multiple contacts with different domains of the 23S rRNA in the assembled 50S subunit and ribosome. Functionally, forms part of the polypeptide exit tunnel. In Methylobacillus flagellatus (strain ATCC 51484 / DSM 6875 / VKM B-1610 / KT), this protein is Large ribosomal subunit protein uL4.